Reading from the N-terminus, the 320-residue chain is Acyl-coenzyme A thioesterase 8 (320 aa).

Residues Asp-233, Ser-255, and Gln-305 each act as charge relay system in the active site. The short motif at Ser-318–Leu-320 is the Microbody targeting signal element.

It belongs to the C/M/P thioester hydrolase family. As to quaternary structure, homodimer.

The protein localises to the peroxisome matrix. It carries out the reaction choloyl-CoA + H2O = cholate + CoA + H(+). It catalyses the reaction chenodeoxycholoyl-CoA + H2O = chenodeoxycholate + CoA + H(+). The enzyme catalyses acetyl-CoA + H2O = acetate + CoA + H(+). The catalysed reaction is butanoyl-CoA + H2O = butanoate + CoA + H(+). It carries out the reaction hexanoyl-CoA + H2O = hexanoate + CoA + H(+). It catalyses the reaction octanoyl-CoA + H2O = octanoate + CoA + H(+). The enzyme catalyses decanoyl-CoA + H2O = decanoate + CoA + H(+). The catalysed reaction is dodecanoyl-CoA + H2O = dodecanoate + CoA + H(+). It carries out the reaction tetradecanoyl-CoA + H2O = tetradecanoate + CoA + H(+). It catalyses the reaction 4,8-dimethylnonanoyl-CoA + H2O = 4,8-dimethylnonanoate + CoA + H(+). The enzyme catalyses 2,6-dimethylheptanoyl-CoA + H2O = 2,6-dimethylheptanoate + CoA + H(+). The catalysed reaction is malonyl-CoA + H2O = malonate + CoA + H(+). It carries out the reaction acetoacetyl-CoA + H2O = acetoacetate + CoA + H(+). It catalyses the reaction propanoyl-CoA + H2O = propanoate + CoA + H(+). The enzyme catalyses succinyl-CoA + H2O = succinate + CoA + H(+). The catalysed reaction is glutaryl-CoA + H2O = glutarate + CoA + H(+). It carries out the reaction hexanedioyl-CoA + H2O = hexanedioate + CoA + H(+). It catalyses the reaction octanedioyl-CoA + H2O = octanedioate + CoA + H(+). The enzyme catalyses decanedioyl-CoA + H2O = decanedioate + CoA + H(+). The catalysed reaction is dodecanedioyl-CoA + H2O = dodecanedioate + CoA + H(+). It carries out the reaction (9Z)-tetradecenoyl-CoA + H2O = (9Z)-tetradecenoate + CoA + H(+). It catalyses the reaction hexadecanoyl-CoA + H2O = hexadecanoate + CoA + H(+). The enzyme catalyses (9Z)-hexadecenoyl-CoA + H2O = (9Z)-hexadecenoate + CoA + H(+). The catalysed reaction is octadecanoyl-CoA + H2O = octadecanoate + CoA + H(+). It carries out the reaction (9Z)-octadecenoyl-CoA + H2O = (9Z)-octadecenoate + CoA + H(+). It catalyses the reaction (9Z,12Z)-octadecadienoyl-CoA + H2O = (9Z,12Z)-octadecadienoate + CoA + H(+). The enzyme catalyses eicosanoyl-CoA + H2O = eicosanoate + CoA + H(+). The catalysed reaction is (5Z,8Z,11Z,14Z)-eicosatetraenoyl-CoA + H2O = (5Z,8Z,11Z,14Z)-eicosatetraenoate + CoA + H(+). It carries out the reaction (3S)-3-hydroxy-3-methylglutaryl-CoA + H2O = 3-hydroxy-3-methylglutarate + CoA + H(+). It catalyses the reaction 3alpha,7alpha,12alpha-trihydroxy-5beta-cholestan-26-oyl-CoA + H2O = 3alpha,7alpha,12alpha-trihydroxy-5beta-cholestan-26-oate + CoA + H(+). The enzyme catalyses 2-methyloctadecanoyl-CoA + H2O = 2-methyloctadecanoate + CoA + H(+). The catalysed reaction is prostaglandin F2alpha-CoA + H2O = prostaglandin F2alpha + CoA + H(+). Its activity is regulated as follows. Inhibited by CoASH (IC(50)=10-15 uM). Also inhibited by cysteine-reactive agents. Its function is as follows. Catalyzes the hydrolysis of acyl-CoAs into free fatty acids and coenzyme A (CoASH), regulating their respective intracellular levels. Displays no strong substrate specificity with respect to the carboxylic acid moiety of Acyl-CoAs. Hydrolyzes medium length (C2 to C20) straight-chain, saturated and unsaturated acyl-CoAS but is inactive towards substrates with longer aliphatic chains. Moreover, it catalyzes the hydrolysis of CoA esters of bile acids, such as choloyl-CoA and chenodeoxycholoyl-CoA and competes with bile acid CoA:amino acid N-acyltransferase (BAAT). Is also able to hydrolyze CoA esters of dicarboxylic acids. It is involved in the metabolic regulation of peroxisome proliferation. The polypeptide is Acyl-coenzyme A thioesterase 8 (Acot8) (Rattus norvegicus (Rat)).